We begin with the raw amino-acid sequence, 302 residues long: Pantothenate synthetase 4 (302 aa).

51–58 (MGALHEGH) provides a ligand contact to ATP. H58 functions as the Proton donor in the catalytic mechanism. Residue Q82 coordinates (R)-pantoate. A beta-alanine-binding site is contributed by Q82. 166–169 (GRKD) is a binding site for ATP. (R)-pantoate is bound at residue Q172. ATP is bound by residues A195 and 203–206 (RSSR).

It belongs to the pantothenate synthetase family. Homodimer.

The protein localises to the cytoplasm. The enzyme catalyses (R)-pantoate + beta-alanine + ATP = (R)-pantothenate + AMP + diphosphate + H(+). Its pathway is cofactor biosynthesis; (R)-pantothenate biosynthesis; (R)-pantothenate from (R)-pantoate and beta-alanine: step 1/1. Catalyzes the condensation of pantoate with beta-alanine in an ATP-dependent reaction via a pantoyl-adenylate intermediate. The chain is Pantothenate synthetase 4 from Frankia alni (strain DSM 45986 / CECT 9034 / ACN14a).